The chain runs to 527 residues: ARS-binding protein 2 (527 aa).

3 disordered regions span residues 160 to 184 (PDVN…HSAS), 219 to 265 (SHHM…NSHN), and 282 to 344 (IDPD…IKRL). Residues 164 to 177 (SSSISTMRTSTSPS) are compositionally biased toward low complexity. A compositionally biased stretch (polar residues) spans 225–239 (RGSQQAHQTTPQNHS). Residues 284–303 (PDWHQWPDDLRDVSSPKESD) are compositionally biased toward basic and acidic residues. 3 positions are modified to phosphoserine: serine 297, serine 298, and serine 302. Residues 328–343 (PRKRGRPPGARNKIKR) are compositionally biased toward basic residues.

The protein resides in the nucleus. In terms of biological role, binds, preferentially, to the Maundrell ARS consensus sequence within ARS3002. In Schizosaccharomyces pombe (strain 972 / ATCC 24843) (Fission yeast), this protein is ARS-binding protein 2 (abp2).